The chain runs to 430 residues: Cyclin-A2 (430 aa).

At Met1 the chain carries N-acetylmethionine. Disordered regions lie at residues 1 to 80 (MLGS…PIND) and 106 to 129 (EEIQ…FNSA). Phosphoserine is present on Ser5. Residues 107-120 (EIQKRPTESKKSES) are compositionally biased toward basic and acidic residues.

It belongs to the cyclin family. Cyclin AB subfamily. In terms of assembly, interacts with the CDK1 and CDK2 protein kinases to form serine/threonine kinase holoenzyme complexes. Interacts with CDK1 (hyperphosphorylated form in G1 and underphosphorylated forms in S and G2). Interacts with CDK2; the interaction increases from G1 to G2. Interacts (associated with CDK2 but not with CDK1) with SCAPER; regulates the activity of CCNA2/CDK2 by transiently maintaining CCNA2 in the cytoplasm. Forms a ternary complex with CDK2 and CDKN1B; CDKN1B inhibits the kinase activity of CDK2 through conformational rearrangements. Interacts with INCA1. Post-translationally, polyubiquitinated via 'Lys-11'-linked ubiquitin by the anaphase-promoting complex (APC/C), leading to its degradation by the proteasome. Deubiquitinated and stabilized by USP37 enables entry into S phase. Ubiquitinated during the G1 phase by the SCF(FBXO31) complex, leading to its proteasomal degradation.

The protein resides in the nucleus. It is found in the cytoplasm. Functionally, cyclin which controls both the G1/S and the G2/M transition phases of the cell cycle. Functions through the formation of specific serine/threonine kinase holoenzyme complexes with the cyclin-dependent protein kinases CDK1 and CDK2. The cyclin subunit confers the substrate specificity of these complexes and differentially interacts with and activates CDK1 and CDK2 throughout the cell cycle. The sequence is that of Cyclin-A2 from Bos taurus (Bovine).